Here is a 472-residue protein sequence, read N- to C-terminus: Serine incorporator 3 (472 aa).

Residues 1-95 are Extracellular-facing; that stretch reads MGAVLGVFSL…KECDVLVRYK (95 aa). Residue asparagine 34 is glycosylated (N-linked (GlcNAc...) asparagine). Residues 96–116 form a helical membrane-spanning segment; it reads AVYRISFALAVFFFAFSLLML. Residues 117-131 are Cytoplasmic-facing; the sequence is NVKTSKDPRAAIHNG. The helical transmembrane segment at 132–152 threads the bilayer; the sequence is FWFFKIAAIVGVMVGSFYIPG. Residues 153-158 lie on the Extracellular side of the membrane; sequence GHFNTA. The chain crosses the membrane as a helical span at residues 159–179; it reads WFVIGMVGAAFFILIQLVLLV. At 180–202 the chain is on the cytoplasmic side; the sequence is DFAHSWNESWVNRMEEGNPKCWY. The chain crosses the membrane as a helical span at residues 203–223; sequence AALLSVTSLFYILSIIFAGLL. Over 224–238 the chain is Extracellular; sequence YTYYTKPDGCTENKF. A helical transmembrane segment spans residues 239–259; that stretch reads FISFNLILCVVISVLSIHPKI. At 260 to 328 the chain is on the cytoplasmic side; that stretch reads QEHQPRSGLL…APTPAVPLQS (69 aa). Residues 329 to 349 form a helical membrane-spanning segment; that stretch reads GPSLNKENFIGLLVFVLSLSY. The Extracellular portion of the chain corresponds to 350–405; it reads SSIRNSSNSQVSKLTLSGSDSVILRDTAANGASDEEDGRPRRAVDNEREGVQYNYS. The N-linked (GlcNAc...) asparagine glycan is linked to asparagine 354. Phosphoserine is present on serine 370. Residue asparagine 403 is glycosylated (N-linked (GlcNAc...) asparagine). The chain crosses the membrane as a helical span at residues 406–426; that stretch reads MFHLMLCSASLYIMMTLTNWY. Residues 427–445 are Cytoplasmic-facing; sequence SPDANFQSMTSKWPAVWVK. A helical transmembrane segment spans residues 446–466; sequence ISSSWVCLLLYVWTLVAPLVL. The Extracellular segment spans residues 467–472; that stretch reads TNRDFS.

It belongs to the TDE1 family. N-glycosylated.

It localises to the cell membrane. The protein resides in the golgi apparatus membrane. It catalyses the reaction a 1,2-diacyl-sn-glycero-3-phospho-L-serine(in) = a 1,2-diacyl-sn-glycero-3-phospho-L-serine(out). It carries out the reaction a 1,2-diacyl-sn-glycero-3-phosphocholine(in) = a 1,2-diacyl-sn-glycero-3-phosphocholine(out). The catalysed reaction is a 1,2-diacyl-sn-glycero-3-phosphoethanolamine(in) = a 1,2-diacyl-sn-glycero-3-phosphoethanolamine(out). Its function is as follows. Restriction factor required to restrict infectivity of gammaretroviruses: acts by inhibiting an early step of viral infection. Impairs the penetration of the viral particle into the cytoplasm. Non-ATP-dependent, non-specific lipid transporter for phosphatidylserine, phosphatidylcholine, and phosphatidylethanolamine. Functions as a scramblase that flips lipids in both directions across the membrane. Phospholipid scrambling results in gammaretroviral surface exposure of phosphatidylserine and loss of membrane asymmetry, which leads to loss of infectivity. This chain is Serine incorporator 3 (SERINC3), found in Bos taurus (Bovine).